The chain runs to 316 residues: Probable cell division protein WhiA (316 aa).

Residues 275–309 constitute a DNA-binding region (H-T-H motif); the sequence is TLKELGEMVSGGKISKSGINHRLRKIDEIAEKLRA.

This sequence belongs to the WhiA family.

Its function is as follows. Involved in cell division and chromosome segregation. The polypeptide is Probable cell division protein WhiA (Bacillus mycoides (strain KBAB4) (Bacillus weihenstephanensis)).